Here is a 587-residue protein sequence, read N- to C-terminus: Solute carrier family 13 member 2 (587 aa).

Transmembrane regions (helical) follow at residues 13-33, 53-73, 86-106, and 136-156; these read FYLIVLCLPIFLLPLPLIVQT, ALPLAVTALFPIVLFPLMGIM, TNILFVGGLMVAIAVEHWNLH, and SMWISNTATTAMMVPIGHAVL. The interval 188 to 208 is disordered; that stretch reads KLDNGQPVSAPSEPRTQKTQE. Helical transmembrane passes span 264–284, 329–349, 367–387, 407–427, 445–465, 477–497, 506–526, and 535–555; these read FAFPTMIILLLLAWLWLQVLF, VLFVLLVVLWFTREPGFFPGW, TVAIFISLVMFIIPSKIPGLM, TVNDKMPWNIVILLGGGFALA, PLQHIPPSATAVILCLLIAIF, LFLPILASMAQAICLHPLYVM, LAFMLPVATPPNAIVFSFGGL, and GFLLNIIGVLAITLSINSWSI.

The protein belongs to the SLC13A/DASS transporter (TC 2.A.47) family. NADC subfamily. As to expression, expressed in large and small intestine and in the kidney proximal tubules.

It localises to the apical cell membrane. It carries out the reaction succinate(out) + 3 Na(+)(out) = succinate(in) + 3 Na(+)(in). The enzyme catalyses fumarate(out) + 3 Na(+)(out) = fumarate(in) + 3 Na(+)(in). The catalysed reaction is 2-oxoglutarate(out) + 3 Na(+)(out) = 2-oxoglutarate(in) + 3 Na(+)(in). With respect to regulation, li(+) decreases succinate transport in the presence of Na(+), by competing at one of the three cation binding sites. Its function is as follows. Low-affinity sodium-dicarboxylate cotransporter, that mediates the entry of citric acid cycle intermediates, such as succinate, citrate, fumarate and alpha-ketoglutarate (2-oxoglutarate) into the small intestine and renal proximal tubule. Transports the dicarboxylate into the cell with a probable stoichiometry of 3 Na(+) for 1 divalent dicarboxylate, rendering the process electrogenic. Citrate is transported in protonated form as a divalent anion, rather than the trivalent form which is normally found in blood. Has a critical role in renal dicarboxylate transport. The polypeptide is Solute carrier family 13 member 2 (Slc13a2) (Rattus norvegicus (Rat)).